The chain runs to 239 residues: MGHKVHPIGIRLGISADWNSKWYANKAEFAGYLAADLKVRQVLRKKMSQAGISKILIERPSNAACVSMHVARPGVVIGKRGEDIEMLRKQLSDIMGVSVHINVIEVRKPELDAQLVAESVAQQLERRIMFRRAMKRSVSNAIRLGALGIKISVAGRLNGAEIARSEWYREGRVPLQTLRADIGYGFSEAHTNYGVTGVKVLIYHGDIFSFSSVGQEKQDDGSRGDRNADRSSRRSREVR.

The 69-residue stretch at 39-107 (VRQVLRKKMS…SVHINVIEVR (69 aa)) folds into the KH type-2 domain. Residues 214–239 (GQEKQDDGSRGDRNADRSSRRSREVR) form a disordered region. Over residues 216-239 (EKQDDGSRGDRNADRSSRRSREVR) the composition is skewed to basic and acidic residues.

Belongs to the universal ribosomal protein uS3 family. Part of the 30S ribosomal subunit. Forms a tight complex with proteins S10 and S14.

Its function is as follows. Binds the lower part of the 30S subunit head. Binds mRNA in the 70S ribosome, positioning it for translation. The polypeptide is Small ribosomal subunit protein uS3 (Xylella fastidiosa (strain M12)).